The primary structure comprises 753 residues: 5-methyltetrahydropteroyltriglutamate--homocysteine methyltransferase (753 aa).

5-methyltetrahydropteroyltri-L-glutamate is bound by residues Arg-17 to Lys-20 and Lys-117. Residues Ile-431 to Ser-433 and Glu-484 each bind L-homocysteine. Residues Ile-431 to Ser-433 and Glu-484 contribute to the L-methionine site. 5-methyltetrahydropteroyltri-L-glutamate contacts are provided by residues Arg-515–Cys-516 and Trp-561. Position 599 (Asp-599) interacts with L-homocysteine. An L-methionine-binding site is contributed by Asp-599. Glu-605 serves as a coordination point for 5-methyltetrahydropteroyltri-L-glutamate. Residues His-641, Cys-643, and Glu-665 each contribute to the Zn(2+) site. His-694 acts as the Proton donor in catalysis. Cys-726 provides a ligand contact to Zn(2+).

Belongs to the vitamin-B12 independent methionine synthase family. Zn(2+) is required as a cofactor.

The enzyme catalyses 5-methyltetrahydropteroyltri-L-glutamate + L-homocysteine = tetrahydropteroyltri-L-glutamate + L-methionine. Its pathway is amino-acid biosynthesis; L-methionine biosynthesis via de novo pathway; L-methionine from L-homocysteine (MetE route): step 1/1. Its function is as follows. Catalyzes the transfer of a methyl group from 5-methyltetrahydrofolate to homocysteine resulting in methionine formation. The chain is 5-methyltetrahydropteroyltriglutamate--homocysteine methyltransferase from Shigella boydii serotype 18 (strain CDC 3083-94 / BS512).